The sequence spans 210 residues: Holliday junction resolvase RecU (210 aa).

Threonine 93, aspartate 95, glutamate 108, and glutamine 127 together coordinate Mg(2+).

Belongs to the RecU family. Requires Mg(2+) as cofactor.

Its subcellular location is the cytoplasm. The catalysed reaction is Endonucleolytic cleavage at a junction such as a reciprocal single-stranded crossover between two homologous DNA duplexes (Holliday junction).. Endonuclease that resolves Holliday junction intermediates in genetic recombination. Cleaves mobile four-strand junctions by introducing symmetrical nicks in paired strands. Promotes annealing of linear ssDNA with homologous dsDNA. Required for DNA repair, homologous recombination and chromosome segregation. The protein is Holliday junction resolvase RecU of Lactobacillus helveticus (strain DPC 4571).